The sequence spans 292 residues: Phosphatidylserine decarboxylase proenzyme (292 aa).

Catalysis depends on charge relay system; for autoendoproteolytic cleavage activity residues Asp89, His146, and Ser252. The active-site Schiff-base intermediate with substrate; via pyruvic acid; for decarboxylase activity is the Ser252. At Ser252 the chain carries Pyruvic acid (Ser); by autocatalysis.

The protein belongs to the phosphatidylserine decarboxylase family. PSD-B subfamily. Prokaryotic type I sub-subfamily. As to quaternary structure, heterodimer of a large membrane-associated beta subunit and a small pyruvoyl-containing alpha subunit. Pyruvate is required as a cofactor. Is synthesized initially as an inactive proenzyme. Formation of the active enzyme involves a self-maturation process in which the active site pyruvoyl group is generated from an internal serine residue via an autocatalytic post-translational modification. Two non-identical subunits are generated from the proenzyme in this reaction, and the pyruvate is formed at the N-terminus of the alpha chain, which is derived from the carboxyl end of the proenzyme. The autoendoproteolytic cleavage occurs by a canonical serine protease mechanism, in which the side chain hydroxyl group of the serine supplies its oxygen atom to form the C-terminus of the beta chain, while the remainder of the serine residue undergoes an oxidative deamination to produce ammonia and the pyruvoyl prosthetic group on the alpha chain. During this reaction, the Ser that is part of the protease active site of the proenzyme becomes the pyruvoyl prosthetic group, which constitutes an essential element of the active site of the mature decarboxylase.

The protein localises to the cell membrane. It catalyses the reaction a 1,2-diacyl-sn-glycero-3-phospho-L-serine + H(+) = a 1,2-diacyl-sn-glycero-3-phosphoethanolamine + CO2. It functions in the pathway phospholipid metabolism; phosphatidylethanolamine biosynthesis; phosphatidylethanolamine from CDP-diacylglycerol: step 2/2. Catalyzes the formation of phosphatidylethanolamine (PtdEtn) from phosphatidylserine (PtdSer). The protein is Phosphatidylserine decarboxylase proenzyme of Shewanella sp. (strain ANA-3).